The sequence spans 412 residues: Heat stress transcription factor A-3 (412 aa).

A DNA-binding region spans residues 53-147; the sequence is IPPFLSKTFD…LLKNIHRRRS (95 aa). Positions 144–170 are disordered; the sequence is RRRSPQSNQTCCSSTSQSQGSPTEVGG. The span at 148-166 shows a compositional bias: low complexity; the sequence is PQSNQTCCSSTSQSQGSPT. The tract at residues 159–225 is hydrophobic repeat HR-A/B; sequence SQSQGSPTEV…QLLSFLAKLF (67 aa). Positions 166 to 224 form a coiled coil; that stretch reads TEVGGEIEKLRKERRALMEEMVELQQQSRGTARHVDTVNQRLKAAEQRQKQLLSFLAKL. The Bipartite nuclear localization signal motif lies at 238–254; that stretch reads KGKEKGGALGLEKARKK. Positions 277–286 match the AHA1 motif; that stretch reads DDWERLLMYD. The AHA2 motif lies at 381-390; it reads DVCWEQFAAG.

This sequence belongs to the HSF family. Class A subfamily. Homotrimer. Post-translationally, exhibits temperature-dependent phosphorylation.

The protein resides in the nucleus. Functionally, transcriptional activator that specifically binds DNA sequence 5'-AGAAnnTTCT-3' known as heat shock promoter elements (HSE). Involved in heat stress response. Activated by DREB2A under heat stress. In Arabidopsis thaliana (Mouse-ear cress), this protein is Heat stress transcription factor A-3 (HSFA3).